A 403-amino-acid polypeptide reads, in one-letter code: 26S proteasome regulatory subunit 6B homolog (403 aa).

Methionine 1 carries the N-acetylmethionine modification. Residue 191–198 coordinates ATP; sequence GPPGTGKT.

Belongs to the AAA ATPase family.

Its subcellular location is the cytoplasm. It is found in the nucleus. Functionally, the 26S proteasome is involved in the ATP-dependent degradation of ubiquitinated proteins. The regulatory (or ATPase) complex confers ATP dependency and substrate specificity to the 26S complex. This chain is 26S proteasome regulatory subunit 6B homolog (psmC4), found in Dictyostelium discoideum (Social amoeba).